A 327-amino-acid chain; its full sequence is Phenylalanine--tRNA ligase alpha subunit (327 aa).

E252 lines the Mg(2+) pocket.

This sequence belongs to the class-II aminoacyl-tRNA synthetase family. Phe-tRNA synthetase alpha subunit type 1 subfamily. In terms of assembly, tetramer of two alpha and two beta subunits. Requires Mg(2+) as cofactor.

The protein localises to the cytoplasm. The catalysed reaction is tRNA(Phe) + L-phenylalanine + ATP = L-phenylalanyl-tRNA(Phe) + AMP + diphosphate + H(+). This chain is Phenylalanine--tRNA ligase alpha subunit, found in Yersinia pestis bv. Antiqua (strain Angola).